The sequence spans 478 residues: Proline--tRNA ligase (478 aa).

It belongs to the class-II aminoacyl-tRNA synthetase family. ProS type 3 subfamily. As to quaternary structure, homodimer.

Its subcellular location is the cytoplasm. It catalyses the reaction tRNA(Pro) + L-proline + ATP = L-prolyl-tRNA(Pro) + AMP + diphosphate. In terms of biological role, catalyzes the attachment of proline to tRNA(Pro) in a two-step reaction: proline is first activated by ATP to form Pro-AMP and then transferred to the acceptor end of tRNA(Pro). This is Proline--tRNA ligase from Clostridium botulinum (strain 657 / Type Ba4).